A 178-amino-acid chain; its full sequence is uncharacterized protein (178 aa).

The signal sequence occupies residues 1-23 (MNYSVIWAITILILGLVLTLAWA).

This is an uncharacterized protein from Invertebrate iridescent virus 3 (IIV-3).